The sequence spans 1150 residues: Alpha-mannosidase 2 (1150 aa).

The Cytoplasmic portion of the chain corresponds to 1–5 (MKLSR). The helical; Signal-anchor for type II membrane protein transmembrane segment at 6 to 26 (QFTVFGSAIFCVVIFSLYLML) threads the bilayer. Residues 27–1150 (DRGHLDYPRG…STFRIRLRWT (1124 aa)) are Lumenal-facing. A glycan (N-linked (GlcNAc...) asparagine) is linked at N78. A phosphoserine mark is found at S80 and S82. N-linked (GlcNAc...) asparagine glycosylation is present at N93. 4 residues coordinate Zn(2+): H174, D176, D288, and H568. Residue D288 is the Nucleophile of the active site. The N-linked (GlcNAc...) asparagine glycan is linked to N1129.

Belongs to the glycosyl hydrolase 38 family. Homodimer; disulfide-linked. Requires Zn(2+) as cofactor. In terms of processing, glycosylated. As to expression, all tissues, mostly in adrenal and thymus.

It is found in the golgi apparatus membrane. It catalyses the reaction N(4)-{beta-D-GlcNAc-(1-&gt;2)-alpha-D-Man-(1-&gt;3)-[alpha-D-Man-(1-&gt;3)-[alpha-D-Man-(1-&gt;6)]-alpha-D-Man-(1-&gt;6)]-beta-D-Man-(1-&gt;4)-beta-D-GlcNAc-(1-&gt;4)-beta-D-GlcNAc}-L-asparaginyl-[protein] + 2 H2O = 2 alpha-D-mannopyranose + an N(4)-{beta-D-GlcNAc-(1-&gt;2)-alpha-D-Man-(1-&gt;3)-[alpha-D-Man-(1-&gt;6)]-beta-D-Man-(1-&gt;4)-beta-D-GlcNAc-(1-&gt;4)-beta-D-GlcNAc}-L-asparaginyl-[protein]. It functions in the pathway protein modification; protein glycosylation. Catalyzes the first committed step in the biosynthesis of complex N-glycans. It controls conversion of high mannose to complex N-glycans; the final hydrolytic step in the N-glycan maturation pathway. This is Alpha-mannosidase 2 (Man2a1) from Mus musculus (Mouse).